Reading from the N-terminus, the 130-residue chain is MAKLQQLVQAIQSGTIKTELPDVRVGDLVRIGVSIQEGNKQRIQPFEGTVISKHQAGANSTVTVRKSLQGIGVERVFPLYAPCVANLQVLRRAQVSRAKLYYLRSRTGKATRLKEKFETLPQIWMNQNQH.

It belongs to the bacterial ribosomal protein bL19 family.

The protein resides in the plastid. The protein localises to the chloroplast. In Chlorella vulgaris (Green alga), this protein is Large ribosomal subunit protein bL19c (rpl19).